The chain runs to 239 residues: Peroxygenase (239 aa).

Position 2 is an N-acetylglycine (Gly-2). Residues 60–95 (HNMSVLQQRAAFFDRNNDGIVYPWETYQGFRAVGFG) enclose the EF-hand domain. Ca(2+) contacts are provided by Asp-73, Asn-75, Asp-77, and Glu-84. The Proline-knot motif lies at 116–125 (PSWIPSPVLS).

It belongs to the caleosin family. As to quaternary structure, homodimer. Requires heme b as cofactor. Ca(2+) is required as a cofactor. In terms of tissue distribution, expressed in pollen (at protein level). Not expressed in leaf, root, stem, tepal, ovary, style, filament or stigma (at protein level).

Its subcellular location is the lipid droplet. It is found in the microsome membrane. It catalyses the reaction RH + ROOH = ROH + ROH.. Functionally, calcium-binding peroxygenase involved in the degradation of storage lipid in oil bodies. This chain is Peroxygenase, found in Lilium longiflorum (Trumpet lily).